The following is a 341-amino-acid chain: GTP-binding protein REM 2 (341 aa).

Residues 1 to 13 (MHTDLDTDMDADT) are compositionally biased toward acidic residues. 2 disordered regions span residues 1 to 72 (MHTD…SMPV) and 84 to 106 (VDELDWPPQASSSGSSDSLGSGE). A compositionally biased stretch (polar residues) spans 18–32 (LCSSSSRQASPSGTP). Ser-27 is subject to Phosphoserine. Residues 43 to 54 (QKPEKLLAELDR) are compositionally biased toward basic and acidic residues. Low complexity predominate over residues 94–105 (SSSGSSDSLGSG). Residues 122–129 (GESGVGKS), 230–233 (NKSD), and 261–262 (AA) each bind GTP. The interval 282 to 309 (RGRGHAGGQRPEPSSPDGPAPPTRRESL) is disordered. Pro residues predominate over residues 294–303 (PSSPDGPAPP). Residue Ser-296 is modified to Phosphoserine.

Belongs to the small GTPase superfamily. RGK family. Expressed in brain and kidney.

The protein resides in the cell membrane. Binds GTP saturably and exhibits a low intrinsic rate of GTP hydrolysis. This chain is GTP-binding protein REM 2 (Rem2), found in Rattus norvegicus (Rat).